The following is a 96-amino-acid chain: Co-chaperonin GroES (96 aa).

The protein belongs to the GroES chaperonin family. As to quaternary structure, heptamer of 7 subunits arranged in a ring. Interacts with the chaperonin GroEL.

It is found in the cytoplasm. Together with the chaperonin GroEL, plays an essential role in assisting protein folding. The GroEL-GroES system forms a nano-cage that allows encapsulation of the non-native substrate proteins and provides a physical environment optimized to promote and accelerate protein folding. GroES binds to the apical surface of the GroEL ring, thereby capping the opening of the GroEL channel. The chain is Co-chaperonin GroES from Hyphomonas neptunium (strain ATCC 15444).